The sequence spans 77 residues: U8-lycotoxin-Ls1n (77 aa).

The first 20 residues, 1 to 20 (MKLMIFTGLVLFAIVSLIEA), serve as a signal peptide directing secretion. Residues 21-26 (QAENEK) constitute a propeptide that is removed on maturation.

This sequence belongs to the neurotoxin 19 (CSTX) family. 08 (U8-Lctx) subfamily. Contains 4 disulfide bonds. In terms of tissue distribution, expressed by the venom gland.

The protein localises to the secreted. The chain is U8-lycotoxin-Ls1n from Lycosa singoriensis (Wolf spider).